A 300-amino-acid polypeptide reads, in one-letter code: GTPase Era (300 aa).

The Era-type G domain maps to 7–175 (YCGFIAIVGR…EKFVRESLKE (169 aa)). Residues 15–22 (GRPNVGKS) are G1. 15-22 (GRPNVGKS) lines the GTP pocket. A G2 region spans residues 41-45 (QTTRH). The G3 stretch occupies residues 62–65 (DTPG). GTP is bound by residues 62-66 (DTPGL) and 124-127 (NKVD). Positions 124–127 (NKVD) are G4. A G5 region spans residues 154-156 (ISA). The region spanning 206 to 283 (MGEELPYSVT…HLELWVKVKA (78 aa)) is the KH type-2 domain.

This sequence belongs to the TRAFAC class TrmE-Era-EngA-EngB-Septin-like GTPase superfamily. Era GTPase family. Monomer.

The protein localises to the cytoplasm. Its subcellular location is the cell inner membrane. Functionally, an essential GTPase that binds both GDP and GTP, with rapid nucleotide exchange. Plays a role in 16S rRNA processing and 30S ribosomal subunit biogenesis and possibly also in cell cycle regulation and energy metabolism. The protein is GTPase Era of Glaesserella parasuis serovar 5 (strain SH0165) (Haemophilus parasuis).